A 366-amino-acid polypeptide reads, in one-letter code: tRNA/tmRNA (uracil-C(5))-methyltransferase (366 aa).

S-adenosyl-L-methionine contacts are provided by Gln-190, Tyr-218, Asn-223, Glu-239, and Asp-299. The active-site Nucleophile is the Cys-324. The active-site Proton acceptor is Glu-358.

This sequence belongs to the class I-like SAM-binding methyltransferase superfamily. RNA M5U methyltransferase family. TrmA subfamily.

It carries out the reaction uridine(54) in tRNA + S-adenosyl-L-methionine = 5-methyluridine(54) in tRNA + S-adenosyl-L-homocysteine + H(+). The catalysed reaction is uridine(341) in tmRNA + S-adenosyl-L-methionine = 5-methyluridine(341) in tmRNA + S-adenosyl-L-homocysteine + H(+). Functionally, dual-specificity methyltransferase that catalyzes the formation of 5-methyluridine at position 54 (m5U54) in all tRNAs, and that of position 341 (m5U341) in tmRNA (transfer-mRNA). This chain is tRNA/tmRNA (uracil-C(5))-methyltransferase, found in Salmonella typhi.